The chain runs to 159 residues: Mitotic-spindle organizing protein 2 (159 aa).

Residues 87–159 form a disordered region; that stretch reads LASDPQDSVP…SGKSNSRSSP (73 aa). Residues 91–105 are compositionally biased toward polar residues; the sequence is PQDSVPISLSTSTSE. Residue Arg111 is modified to Omega-N-methylarginine. The residue at position 153 (Ser153) is a Phosphoserine.

It belongs to the MOZART2 family. In terms of assembly, associates with the gamma-tubulin ring complex (gTuRC) consisting of TUBGCP2, TUBGCP3, TUBGCP4, TUBGCP5 and TUBGCP6 and gamma-tubulin TUBG1 or TUBG2; within the complex, interacts with TUBGCP2; the interaction plays a role in gTuRC activation.

The protein resides in the cytoplasm. Its subcellular location is the cytoskeleton. The protein localises to the microtubule organizing center. It is found in the centrosome. It localises to the spindle. Required for the recruitment and the assembly of the gamma-tubulin ring complex (gTuRC) at the centrosome. The gTuRC regulates the minus-end nucleation of alpha-beta tubulin heterodimers that grow into microtubule protafilaments, a critical step in centrosome duplication and spindle formation. In Mus musculus (Mouse), this protein is Mitotic-spindle organizing protein 2 (Mzt2).